The sequence spans 480 residues: Iron-sulfur cluster assembly SufBD family protein slr0074 (480 aa).

It belongs to the iron-sulfur cluster assembly SufBD family.

This Synechocystis sp. (strain ATCC 27184 / PCC 6803 / Kazusa) protein is Iron-sulfur cluster assembly SufBD family protein slr0074.